A 295-amino-acid chain; its full sequence is GTPase Era (295 aa).

The region spanning Lys-7–Trp-176 is the Era-type G domain. The G1 stretch occupies residues Gly-15–Ser-22. GTP is bound at residue Gly-15–Ser-22. The interval Gln-41 to Ser-45 is G2. The interval Asp-62–Gly-65 is G3. GTP is bound by residues Asp-62–Ile-66 and Asn-124–Asp-127. A G4 region spans residues Asn-124 to Asp-127. The tract at residues Ile-152 to Ala-154 is G5. In terms of domain architecture, KH type-2 spans Leu-204 to Ala-281.

It belongs to the TRAFAC class TrmE-Era-EngA-EngB-Septin-like GTPase superfamily. Era GTPase family. As to quaternary structure, monomer.

It localises to the cytoplasm. It is found in the cell inner membrane. Its function is as follows. An essential GTPase that binds both GDP and GTP, with rapid nucleotide exchange. Plays a role in 16S rRNA processing and 30S ribosomal subunit biogenesis and possibly also in cell cycle regulation and energy metabolism. This chain is GTPase Era, found in Rickettsia typhi (strain ATCC VR-144 / Wilmington).